A 141-amino-acid polypeptide reads, in one-letter code: Large ribosomal subunit protein uL11 (141 aa).

The protein belongs to the universal ribosomal protein uL11 family. In terms of assembly, part of the ribosomal stalk of the 50S ribosomal subunit. Interacts with L10 and the large rRNA to form the base of the stalk. L10 forms an elongated spine to which L12 dimers bind in a sequential fashion forming a multimeric L10(L12)X complex. In terms of processing, one or more lysine residues are methylated.

Forms part of the ribosomal stalk which helps the ribosome interact with GTP-bound translation factors. This Gloeobacter violaceus (strain ATCC 29082 / PCC 7421) protein is Large ribosomal subunit protein uL11.